A 265-amino-acid chain; its full sequence is Phosphonates import ATP-binding protein PhnC 1 (265 aa).

One can recognise an ABC transporter domain in the interval leucine 3 to glutamine 247. Position 36 to 43 (glycine 36 to threonine 43) interacts with ATP. The tract at residues asparagine 245–cysteine 265 is disordered.

The protein belongs to the ABC transporter superfamily. Phosphonates importer (TC 3.A.1.9.1) family. The complex is composed of two ATP-binding proteins (PhnC), two transmembrane proteins (PhnE) and a solute-binding protein (PhnD).

It is found in the cell inner membrane. The catalysed reaction is phosphonate(out) + ATP + H2O = phosphonate(in) + ADP + phosphate + H(+). Functionally, part of the ABC transporter complex PhnCDE involved in phosphonates import. Responsible for energy coupling to the transport system. The sequence is that of Phosphonates import ATP-binding protein PhnC 1 from Pseudomonas savastanoi pv. phaseolicola (strain 1448A / Race 6) (Pseudomonas syringae pv. phaseolicola (strain 1448A / Race 6)).